A 385-amino-acid polypeptide reads, in one-letter code: Aspartate/prephenate aminotransferase (385 aa).

Residues G39, W125, and N175 each contribute to the L-aspartate site. An N6-(pyridoxal phosphate)lysine modification is found at K234. R361 lines the L-aspartate pocket.

The protein belongs to the class-I pyridoxal-phosphate-dependent aminotransferase family. As to quaternary structure, homodimer. Pyridoxal 5'-phosphate serves as cofactor.

The protein localises to the cytoplasm. The catalysed reaction is L-aspartate + 2-oxoglutarate = oxaloacetate + L-glutamate. It catalyses the reaction L-arogenate + oxaloacetate = prephenate + L-aspartate. In terms of biological role, catalyzes the reversible conversion of aspartate and 2-oxoglutarate to glutamate and oxaloacetate. Can also transaminate prephenate in the presence of aspartate. The chain is Aspartate/prephenate aminotransferase (aspC) from Thermus thermophilus (strain ATCC 27634 / DSM 579 / HB8).